The sequence spans 701 residues: Ribosomal RNA large subunit methyltransferase K/L (701 aa).

The THUMP domain occupies 44 to 155 (QAYKICLWSR…SDKLTVYLDL (112 aa)).

It belongs to the methyltransferase superfamily. RlmKL family.

It localises to the cytoplasm. The catalysed reaction is guanosine(2445) in 23S rRNA + S-adenosyl-L-methionine = N(2)-methylguanosine(2445) in 23S rRNA + S-adenosyl-L-homocysteine + H(+). It carries out the reaction guanosine(2069) in 23S rRNA + S-adenosyl-L-methionine = N(2)-methylguanosine(2069) in 23S rRNA + S-adenosyl-L-homocysteine + H(+). Specifically methylates the guanine in position 2445 (m2G2445) and the guanine in position 2069 (m7G2069) of 23S rRNA. This chain is Ribosomal RNA large subunit methyltransferase K/L, found in Pseudoalteromonas atlantica (strain T6c / ATCC BAA-1087).